Here is a 549-residue protein sequence, read N- to C-terminus: Dihydroxy-acid dehydratase (549 aa).

Asp-78 lines the Mg(2+) pocket. Cys-119 is a [2Fe-2S] cluster binding site. Positions 120 and 121 each coordinate Mg(2+). An N6-carboxylysine modification is found at Lys-121. [2Fe-2S] cluster is bound at residue Cys-191. Glu-441 provides a ligand contact to Mg(2+). Ser-466 functions as the Proton acceptor in the catalytic mechanism.

The protein belongs to the IlvD/Edd family. In terms of assembly, homodimer. Requires [2Fe-2S] cluster as cofactor. The cofactor is Mg(2+).

It carries out the reaction (2R)-2,3-dihydroxy-3-methylbutanoate = 3-methyl-2-oxobutanoate + H2O. The catalysed reaction is (2R,3R)-2,3-dihydroxy-3-methylpentanoate = (S)-3-methyl-2-oxopentanoate + H2O. It functions in the pathway amino-acid biosynthesis; L-isoleucine biosynthesis; L-isoleucine from 2-oxobutanoate: step 3/4. Its pathway is amino-acid biosynthesis; L-valine biosynthesis; L-valine from pyruvate: step 3/4. Its function is as follows. Functions in the biosynthesis of branched-chain amino acids. Catalyzes the dehydration of (2R,3R)-2,3-dihydroxy-3-methylpentanoate (2,3-dihydroxy-3-methylvalerate) into 2-oxo-3-methylpentanoate (2-oxo-3-methylvalerate) and of (2R)-2,3-dihydroxy-3-methylbutanoate (2,3-dihydroxyisovalerate) into 2-oxo-3-methylbutanoate (2-oxoisovalerate), the penultimate precursor to L-isoleucine and L-valine, respectively. The polypeptide is Dihydroxy-acid dehydratase (Methanosphaera stadtmanae (strain ATCC 43021 / DSM 3091 / JCM 11832 / MCB-3)).